The following is a 225-amino-acid chain: MSTIAIVDYGMGNFHSVARALQHAAPDADIRICNRPEQIDAADRVVFPGQGAMPDCMRTLNESGLRAAVERAAASKPLMGVCVGEQMLFERSEEGGTPCLGIFPGEVRRFAGPQFADPVAADQAAAAPPAAARERLKVPHMGWNQVRQTRSHALWEGIPDGTHFYFVHSYYAAPSDPALTTGVTDYGVAFTCAVAAANIFAVQFHPEKSAEHGLRLYRNFVDWQP.

Positions 3–225 (TIAIVDYGMG…LYRNFVDWQP (223 aa)) constitute a Glutamine amidotransferase type-1 domain. C82 (nucleophile) is an active-site residue. Residues H205 and E207 contribute to the active site.

In terms of assembly, heterodimer of HisH and HisF.

It is found in the cytoplasm. It catalyses the reaction 5-[(5-phospho-1-deoxy-D-ribulos-1-ylimino)methylamino]-1-(5-phospho-beta-D-ribosyl)imidazole-4-carboxamide + L-glutamine = D-erythro-1-(imidazol-4-yl)glycerol 3-phosphate + 5-amino-1-(5-phospho-beta-D-ribosyl)imidazole-4-carboxamide + L-glutamate + H(+). The catalysed reaction is L-glutamine + H2O = L-glutamate + NH4(+). The protein operates within amino-acid biosynthesis; L-histidine biosynthesis; L-histidine from 5-phospho-alpha-D-ribose 1-diphosphate: step 5/9. Its function is as follows. IGPS catalyzes the conversion of PRFAR and glutamine to IGP, AICAR and glutamate. The HisH subunit catalyzes the hydrolysis of glutamine to glutamate and ammonia as part of the synthesis of IGP and AICAR. The resulting ammonia molecule is channeled to the active site of HisF. This chain is Imidazole glycerol phosphate synthase subunit HisH, found in Bordetella pertussis (strain Tohama I / ATCC BAA-589 / NCTC 13251).